Here is a 292-residue protein sequence, read N- to C-terminus: Cyclin-dependent kinase 5 (292 aa).

One can recognise a Protein kinase domain in the interval 4 to 286 (YEKLEKIGEG…AEEALQHPYF (283 aa)). Residues 10–18 (IGEGTYGTV) and K33 each bind ATP. Y15 is subject to Phosphotyrosine; by ABL1, EPHA4 and FYN. At T17 the chain carries Phosphothreonine. N6-acetyllysine is present on K56. The residue at position 72 (S72) is a Phosphoserine. D126 functions as the Proton acceptor in the catalytic mechanism. At S159 the chain carries Phosphoserine.

Belongs to the protein kinase superfamily. CMGC Ser/Thr protein kinase family. CDC2/CDKX subfamily. As to quaternary structure, heterodimer composed of a catalytic subunit CDK5 and a regulatory subunit CDK5R1 (p25) and macromolecular complex composed of at least CDK5, CDK5R1 (p35) and CDK5RAP1 or CDK5RAP2 or CDK5RAP3. Only the heterodimer shows kinase activity. Under neurotoxic stress and neuronal injury conditions, p35 is cleaved by calpain to generate p25 that hyperactivates CDK5, that becomes functionally disabled and often toxic. Found in a trimolecular complex with CABLES1 and ABL1. Interacts with CABLES1 and CABLES2. Interacts with AATK and GSTP1. Binds to HDAC1 when in complex with p25. Interaction with myristoylation p35 promotes CDK5 association with membranes. Both isoforms 1 and 2 interacts with beta-catenin/CTNNB1. Interacts with delta-catenin/CTNND2 and APEX1. Interacts with P53/TP53 in neurons. Interacts with PTK2/FAK1. Interacts with EPHA4; may mediate the activation of NGEF by EPHA4. The complex p35/CDK5 interacts with CLOCK. Interacts with HTR6. Phosphorylation on Tyr-15 by ABL1 and FYN, and on Ser-159 by casein kinase 1 promotes kinase activity. By contrast, phosphorylation at Thr-14 inhibits activity. Post-translationally, phosphorylation at Ser-159 is essential for maximal catalytic activity. In terms of tissue distribution, expressed in hippocampal neuronal synaptic termini (at protein level). Expressed predominantly in post-mitotic neurons of the central and peripheral nervous system.

Its subcellular location is the cytoplasm. The protein localises to the nucleus. The protein resides in the cell membrane. It is found in the perikaryon. It localises to the cell projection. Its subcellular location is the lamellipodium. The protein localises to the growth cone. The protein resides in the postsynaptic density. It is found in the synapse. The catalysed reaction is L-seryl-[protein] + ATP = O-phospho-L-seryl-[protein] + ADP + H(+). It catalyses the reaction L-threonyl-[protein] + ATP = O-phospho-L-threonyl-[protein] + ADP + H(+). Inhibited by 2-(1-ethyl-2-hydroxyethylamino)-6-benzylamino-9-isopropylpurine (roscovitine), 1-isopropyl-4-aminobenzyl-6-ether-linked benzimidazoles, resveratrol, AT-7519 and olomoucine. Activated by CDK5R1 (p35) and CDK5R2 (p39) during the development of the nervous system; degradation of CDK5R1 (p35) and CDK5R2 (p39) by proteasome result in down regulation of kinase activity, during this process, CDK5 phosphorylates p35 and induces its ubiquitination and subsequent degradation. Kinase activity is mainly determined by the amount of p35 available and subcellular location; reversible association to plasma membrane inhibits activity. Long-term inactivation as well as CDK5R1 (p25)-mediated hyperactivation of CDK5 triggers cell death. The pro-death activity of hyperactivated CDK5 is suppressed by membrane association of CDK5, via myristoylation of p35. Brain-derived neurotrophic factor, glial-derived neurotrophic factor, nerve growth factor (NGF), retinoic acid, laminin and neuregulin promote activity. Neurotoxicity enhances nuclear activity, thus leading to MEF2 phosphorylation and inhibition prior to apoptosis of cortical neurons. Repression by GSTP1 via p25/p35 translocation prevents neurodegeneration. Its function is as follows. Proline-directed serine/threonine-protein kinase essential for neuronal cell cycle arrest and differentiation and may be involved in apoptotic cell death in neuronal diseases by triggering abortive cell cycle re-entry. Interacts with D1 and D3-type G1 cyclins. Phosphorylates SRC, NOS3, VIM/vimentin, p35/CDK5R1, MEF2A, SIPA1L1, SH3GLB1, PXN, PAK1, MCAM/MUC18, SEPT5, SYN1, DNM1, AMPH, SYNJ1, CDK16, RAC1, RHOA, CDC42, TONEBP/NFAT5, MAPT/TAU, MAP1B, histone H1, p53/TP53, HDAC1, APEX1, PTK2/FAK1, huntingtin/HTT, ATM, MAP2, NEFH and NEFM. Regulates several neuronal development and physiological processes including neuronal survival, migration and differentiation, axonal and neurite growth, synaptogenesis, oligodendrocyte differentiation, synaptic plasticity and neurotransmission, by phosphorylating key proteins. Negatively regulates the CACNA1B/CAV2.2 -mediated Ca(2+) release probability at hippocampal neuronal soma and synaptic terminals. Activated by interaction with CDK5R1 (p35) and CDK5R2 (p39), especially in postmitotic neurons, and promotes CDK5R1 (p35) expression in an autostimulation loop. Phosphorylates many downstream substrates such as Rho and Ras family small GTPases (e.g. PAK1, RAC1, RHOA, CDC42) or microtubule-binding proteins (e.g. MAPT/TAU, MAP2, MAP1B), and modulates actin dynamics to regulate neurite growth and/or spine morphogenesis. Also phosphorylates exocytosis associated proteins such as MCAM/MUC18, SEPT5, SYN1, and CDK16/PCTAIRE1 as well as endocytosis associated proteins such as DNM1, AMPH and SYNJ1 at synaptic terminals. In the mature central nervous system (CNS), regulates neurotransmitter movements by phosphorylating substrates associated with neurotransmitter release and synapse plasticity; synaptic vesicle exocytosis, vesicles fusion with the presynaptic membrane, and endocytosis. Promotes cell survival by activating anti-apoptotic proteins BCL2 and STAT3, and negatively regulating of JNK3/MAPK10 activity. Phosphorylation of p53/TP53 in response to genotoxic and oxidative stresses enhances its stabilization by preventing ubiquitin ligase-mediated proteasomal degradation, and induces transactivation of p53/TP53 target genes, thus regulating apoptosis. Phosphorylation of p35/CDK5R1 enhances its stabilization by preventing calpain-mediated proteolysis producing p25/CDK5R1 and avoiding ubiquitin ligase-mediated proteasomal degradation. During aberrant cell-cycle activity and DNA damage, p25/CDK5 activity elicits cell-cycle activity and double-strand DNA breaks that precedes neuronal death by deregulating HDAC1. DNA damage triggered phosphorylation of huntingtin/HTT in nuclei of neurons protects neurons against polyglutamine expansion as well as DNA damage mediated toxicity. Phosphorylation of PXN reduces its interaction with PTK2/FAK1 in matrix-cell focal adhesions (MCFA) during oligodendrocytes (OLs) differentiation. Negative regulator of Wnt/beta-catenin signaling pathway. Activator of the GAIT (IFN-gamma-activated inhibitor of translation) pathway, which suppresses expression of a post-transcriptional regulon of proinflammatory genes in myeloid cells; phosphorylates the linker domain of glutamyl-prolyl tRNA synthetase (EPRS) in a IFN-gamma-dependent manner, the initial event in assembly of the GAIT complex. Phosphorylation of SH3GLB1 is required for autophagy induction in starved neurons. Phosphorylation of TONEBP/NFAT5 in response to osmotic stress mediates its rapid nuclear localization. MEF2 is inactivated by phosphorylation in nucleus in response to neurotoxin, thus leading to neuronal apoptosis. APEX1 AP-endodeoxyribonuclease is repressed by phosphorylation, resulting in accumulation of DNA damage and contributing to neuronal death. NOS3 phosphorylation down regulates NOS3-derived nitrite (NO) levels. SRC phosphorylation mediates its ubiquitin-dependent degradation and thus leads to cytoskeletal reorganization. May regulate endothelial cell migration and angiogenesis via the modulation of lamellipodia formation. Involved in dendritic spine morphogenesis by mediating the EFNA1-EPHA4 signaling. The complex p35/CDK5 participates in the regulation of the circadian clock by modulating the function of CLOCK protein: phosphorylates CLOCK at 'Thr-451' and 'Thr-461' and regulates the transcriptional activity of the CLOCK-BMAL1 heterodimer in association with altered stability and subcellular distribution. The sequence is that of Cyclin-dependent kinase 5 from Rattus norvegicus (Rat).